The chain runs to 248 residues: UPF0736 protein BCB4264_A1231 (248 aa).

Belongs to the UPF0736 family.

The chain is UPF0736 protein BCB4264_A1231 from Bacillus cereus (strain B4264).